An 896-amino-acid chain; its full sequence is MQKTQMLSAEIFRRRGHIRKQCPLCKSHFWTLRPDQEVCGDQPCTPYGFIGNPPTKVAVESLRDVRERFLSFFERHGHARIKRYPVVARWRDDVYLVGASIYDFQPWVTSGAVPPPANPLTISQPSIRLTDVDKVGRSGRHLTGFEMMAHHAFNYPDKYVYWIDETTEYAYRFFTEELGIPPEEITFKESMWEGGGNAGECFEVLVRGLEAATLVFMHYEVKDGKYVELPLKIVDTGYGLERIYWLIKGTPTIYDAVFGPYLAKVRERLGVPEPPRDVMAKASIYFGQMDPEVISLDKAYDIIAEKIGVDGKWLREVVKPQEALYVLADHSRTVAWMIADGVIPSNSGAGYLARLLIRRALRGLMLAGVDAPLVELFDLHLKELRYDYPEVWEARSLILELVDMEEKKYREVLKSAPAVVKRALEENRRRGKAGLDKEDLVTLYDSYGLPPEVVAEAAKSMGIEVKVPDDFYSLLASRHVRREKGREATLVEMAKVADLPRTRELFYEDAYMRTFKAKVLRVIDGKYVVLDQTAFYAEGGGQPADTGVLRHSGGVAKVVDVQRVGHVIVHVVEGDVPQEGSEVVGEVDWERRYALMKMHTGTHVLIQSIRRVLGPHIWQAGAQKDIPFSRIDVTHYKLPTPEEVAKIERLANDVVQRDLPVYVKVMPRNEAEAKYGFILYQGGVVPAREIRVVQIGPDDEPYDVQACGGTHLRRTGEIGLIKVHKVERIADGVVRFIFTTGPHAVAYVQELERQAAEAAALGGGSKEELVEVVKRLLKRAEEAEKKARHYAELYAAALAENLKAEAVGQRRLAVVELDDEELAKRVALLATKRDPDLVLVVKAGERVTIYTGGVDVGPIVKALREIGFRGGGSKTFAQGVYAGDVEKLKEAIRRAL.

4 residues coordinate Zn(2+): His599, His603, Cys707, and His711.

This sequence belongs to the class-II aminoacyl-tRNA synthetase family. Requires Zn(2+) as cofactor.

The protein localises to the cytoplasm. The enzyme catalyses tRNA(Ala) + L-alanine + ATP = L-alanyl-tRNA(Ala) + AMP + diphosphate. Functionally, catalyzes the attachment of alanine to tRNA(Ala) in a two-step reaction: alanine is first activated by ATP to form Ala-AMP and then transferred to the acceptor end of tRNA(Ala). Also edits incorrectly charged Ser-tRNA(Ala) and Gly-tRNA(Ala) via its editing domain. The chain is Alanine--tRNA ligase from Pyrobaculum calidifontis (strain DSM 21063 / JCM 11548 / VA1).